The primary structure comprises 103 residues: Large ribosomal subunit protein bL21 (103 aa).

It belongs to the bacterial ribosomal protein bL21 family. As to quaternary structure, part of the 50S ribosomal subunit. Contacts protein L20.

In terms of biological role, this protein binds to 23S rRNA in the presence of protein L20. This Verminephrobacter eiseniae (strain EF01-2) protein is Large ribosomal subunit protein bL21.